We begin with the raw amino-acid sequence, 98 residues long: DNA-directed RNA polymerase subunit omega (98 aa).

The protein belongs to the RNA polymerase subunit omega family. As to quaternary structure, the RNAP catalytic core consists of 2 alpha, 1 beta, 1 beta' and 1 omega subunit. When a sigma factor is associated with the core the holoenzyme is formed, which can initiate transcription.

The catalysed reaction is RNA(n) + a ribonucleoside 5'-triphosphate = RNA(n+1) + diphosphate. In terms of biological role, promotes RNA polymerase assembly. Latches the N- and C-terminal regions of the beta' subunit thereby facilitating its interaction with the beta and alpha subunits. This is DNA-directed RNA polymerase subunit omega from Xylella fastidiosa (strain M12).